A 319-amino-acid chain; its full sequence is Methionyl-tRNA formyltransferase (319 aa).

113 to 116 (SLLP) is a (6S)-5,6,7,8-tetrahydrofolate binding site.

It belongs to the Fmt family.

It catalyses the reaction L-methionyl-tRNA(fMet) + (6R)-10-formyltetrahydrofolate = N-formyl-L-methionyl-tRNA(fMet) + (6S)-5,6,7,8-tetrahydrofolate + H(+). Functionally, attaches a formyl group to the free amino group of methionyl-tRNA(fMet). The formyl group appears to play a dual role in the initiator identity of N-formylmethionyl-tRNA by promoting its recognition by IF2 and preventing the misappropriation of this tRNA by the elongation apparatus. The protein is Methionyl-tRNA formyltransferase of Pseudomonas fluorescens (strain ATCC BAA-477 / NRRL B-23932 / Pf-5).